The primary structure comprises 910 residues: Protein translocase subunit SecA 1 (910 aa).

Residues Gln86, 104 to 108 (GEGKT), and Asp512 contribute to the ATP site. Zn(2+) contacts are provided by Cys894, Cys896, Cys905, and His906.

This sequence belongs to the SecA family. In terms of assembly, monomer and homodimer. Part of the essential Sec protein translocation apparatus which comprises SecA, SecYEG and auxiliary proteins SecDF-YajC and YidC. It depends on Zn(2+) as a cofactor.

Its subcellular location is the cell inner membrane. It is found in the cytoplasm. The catalysed reaction is ATP + H2O + cellular proteinSide 1 = ADP + phosphate + cellular proteinSide 2.. Part of the Sec protein translocase complex. Interacts with the SecYEG preprotein conducting channel. Has a central role in coupling the hydrolysis of ATP to the transfer of proteins into and across the cell membrane, serving both as a receptor for the preprotein-SecB complex and as an ATP-driven molecular motor driving the stepwise translocation of polypeptide chains across the membrane. The chain is Protein translocase subunit SecA 1 from Bordetella avium (strain 197N).